The primary structure comprises 472 residues: Transcription factor TGAL1 (472 aa).

The disordered stretch occupies residues 136–190 (WGESTIADTSPRTDTSTDPDTDERNQMFEQGQLAAPTASDSSDRSKDKLDHKTLR). Residues 143–153 (DTSPRTDTSTD) show a composition bias toward low complexity. A compositionally biased stretch (basic and acidic residues) spans 176-187 (SSDRSKDKLDHK). Residues 185–229 (DHKTLRRLAQNREAARKSRLRKKAYIQNLESSRLKLTQIEQELQR) form the bZIP domain. Residues 187–207 (KTLRRLAQNREAARKSRLRKK) form a basic motif region. Residues 213–227 (LESSRLKLTQIEQEL) are leucine-zipper. Residues 252-469 (ALAFDMEYAR…RALSSLWLAR (218 aa)) form the DOG1 domain.

It belongs to the bZIP family. As to quaternary structure, isoforms 1 and 2 interact with NPR2/NH2. Isoform 2 interacts with NPR1/NH1 and NPR3/NH3.

The protein resides in the nucleus. In terms of biological role, transcriptional regulator involved in defense response. The protein is Transcription factor TGAL1 of Oryza sativa subsp. japonica (Rice).